We begin with the raw amino-acid sequence, 177 residues long: UPF0251 protein Cag_0886 (177 aa).

Residues 147–177 (GGCLSDEESDEQENEQRTVGYPESEEELEIE) are disordered.

It belongs to the UPF0251 family.

The sequence is that of UPF0251 protein Cag_0886 from Chlorobium chlorochromatii (strain CaD3).